We begin with the raw amino-acid sequence, 734 residues long: Diacylglycerol kinase alpha (734 aa).

EF-hand domains are found at residues 109 to 144 (RPED…MMRM) and 154 to 189 (ELRP…TVPL). Residues aspartate 122, aspartate 124, asparagine 126, glutamate 133, aspartate 167, aspartate 169, serine 171, serine 173, and glutamate 178 each contribute to the Ca(2+) site. 2 Phorbol-ester/DAG-type zinc fingers span residues 204 to 252 (QHMW…ALPC) and 268 to 318 (SHVW…GHEC). The 135-residue stretch at 371-505 (SNTHPLLVFV…MDRWSVEVIP (135 aa)) folds into the DAGKc domain. Lysine 483 carries the post-translational modification N6-acetyllysine.

Belongs to the eukaryotic diacylglycerol kinase family. Monomer.

Its subcellular location is the cytoplasm. It is found in the cytosol. The catalysed reaction is a 1,2-diacyl-sn-glycerol + ATP = a 1,2-diacyl-sn-glycero-3-phosphate + ADP + H(+). It catalyses the reaction a 1-O-alkyl-sn-glycerol + ATP = a 1-O-alkyl-sn-glycero-3-phosphate + ADP + H(+). It carries out the reaction 1-O-alkyl-2-acyl-sn-glycerol + ATP = 1-O-alkyl-2-acyl-sn-glycero-3-phosphate + ADP + H(+). The enzyme catalyses 1,2-dihexadecanoyl-sn-glycerol + ATP = 1,2-dihexadecanoyl-sn-glycero-3-phosphate + ADP + H(+). The catalysed reaction is 1-hexadecanoyl-2-(9Z-octadecenoyl)-sn-glycerol + ATP = 1-hexadecanoyl-2-(9Z-octadecenoyl)-sn-glycero-3-phosphate + ADP + H(+). It catalyses the reaction 2-(9Z-octadecenoyl)-glycerol + ATP = 2-(9Z-octadecenoyl)-sn-glycero-3-phosphate + ADP + H(+). It carries out the reaction 1,2-di-(9Z-octadecenoyl)-sn-glycerol + ATP = 1,2-di-(9Z-octadecenoyl)-sn-glycero-3-phosphate + ADP + H(+). The enzyme catalyses 1-octadecanoyl-2-(5Z,8Z,11Z,14Z-eicosatetraenoyl)-sn-glycerol + ATP = 1-octadecanoyl-2-(5Z,8Z,11Z,14Z-eicosatetraenoyl)-sn-glycero-3-phosphate + ADP + H(+). The catalysed reaction is 1,2-didecanoyl-sn-glycerol + ATP = 1,2-didecanoyl-sn-glycero-3-phosphate + ADP + H(+). It catalyses the reaction 1-O-hexadecyl-2-acetyl-sn-glycerol + ATP = 1-O-hexadecyl-2-acetyl-sn-glycero-3-phosphate + ADP + H(+). It carries out the reaction 1-O-hexadecyl-2-(5Z,8Z,11Z,14Z-eicosatetraenoyl)-sn-glycerol + ATP = 1-O-hexadecyl-2-(5Z,8Z,11Z,14Z-eicosatetraenoyl)-sn-glycero-3-phosphate + ADP + H(+). The enzyme catalyses 1-O-hexadecyl-2-(9Z-octadecenoyl)-sn-glycerol + ATP = 1-O-hexadecyl-2-(9Z-octadecenoyl)-sn-glycero-3-phosphate + ADP + H(+). The catalysed reaction is 1-O-hexadecyl-sn-glycerol + ATP = 1-O-hexadecyl-sn-glycero-3-phosphate + ADP + H(+). It participates in lipid metabolism; glycerolipid metabolism. With respect to regulation, stimulated by calcium and phosphatidylserine. Its function is as follows. Diacylglycerol kinase that converts diacylglycerol/DAG into phosphatidic acid/phosphatidate/PA and regulates the respective levels of these two bioactive lipids. Thereby, acts as a central switch between the signaling pathways activated by these second messengers with different cellular targets and opposite effects in numerous biological processes. Also plays an important role in the biosynthesis of complex lipids. Can also phosphorylate 1-alkyl-2-acylglycerol in vitro as efficiently as diacylglycerol provided it contains an arachidonoyl group. Also involved in the production of alkyl-lysophosphatidic acid, another bioactive lipid, through the phosphorylation of 1-alkyl-2-acetyl glycerol. This Bos taurus (Bovine) protein is Diacylglycerol kinase alpha (DGKA).